Here is a 527-residue protein sequence, read N- to C-terminus: Peptide chain release factor 3 (527 aa).

Positions 9–277 (AKRRTFAIIS…CIVDWAPQPL (269 aa)) constitute a tr-type G domain. GTP contacts are provided by residues 18–25 (SHPDAGKT), 86–90 (DTPGH), and 140–143 (NKLD).

This sequence belongs to the TRAFAC class translation factor GTPase superfamily. Classic translation factor GTPase family. PrfC subfamily.

The protein localises to the cytoplasm. Its function is as follows. Increases the formation of ribosomal termination complexes and stimulates activities of RF-1 and RF-2. It binds guanine nucleotides and has strong preference for UGA stop codons. It may interact directly with the ribosome. The stimulation of RF-1 and RF-2 is significantly reduced by GTP and GDP, but not by GMP. In Pseudomonas paraeruginosa (strain DSM 24068 / PA7) (Pseudomonas aeruginosa (strain PA7)), this protein is Peptide chain release factor 3.